Consider the following 585-residue polypeptide: Vacuolar protein 8 (585 aa).

Gly2 carries the N-myristoyl glycine lipid modification. S-palmitoyl cysteine attachment occurs at residues Cys4, Cys5, and Cys7. ARM repeat units lie at residues 39–76, 77–116, 118–157, 159–198, 200–239, 243–282, 284–323, 325–365, and 409–448; these read NRSD…FAEI, TEKD…NLAV, TENK…NLAT, DDNK…NMTH, GENR…NIAV, NRKK…NLAS, SGYQ…NISI, PLNE…NLAA, and DDLK…NLCS. Residues 531–562 are compositionally biased toward low complexity; sequence QIGQTTTTTTTNITNNNTNTNTNTNTTTSTSN. The disordered stretch occupies residues 531–565; sequence QIGQTTTTTTTNITNNNTNTNTNTNTTTSTSNEDQ.

Belongs to the beta-catenin family.

It is found in the vacuole membrane. Its function is as follows. Functions in both vacuole inheritance and protein targeting from the cytoplasm to vacuole. Vacuole inheritance has a role in the regulation of hyphal cell division. This chain is Vacuolar protein 8 (VAC8), found in Candida albicans (strain SC5314 / ATCC MYA-2876) (Yeast).